The chain runs to 877 residues: GTPase activating protein homolog 2 (877 aa).

Residues 14–285 (FKFTDNLWDG…SVEMIDITND (272 aa)) form the F-BAR domain. Residues 130 to 214 (QEGIKLKQDM…SNCDEEYREQ (85 aa)) adopt a coiled-coil conformation. A Rho-GAP domain is found at 374–560 (VSLDELMNRQ…TLIKQIPPPL (187 aa)). Disordered stretches follow at residues 589–612 (DQLS…GSGS), 644–704 (LPPL…AEPT), and 749–800 (AATP…LAST). 3 stretches are compositionally biased toward low complexity: residues 593–612 (NDDN…GSGS), 653–676 (SGSG…SPTT), and 749–779 (AATP…STST). Residues 780-800 (IKTSSPDRTTPLTSSPPLAST) are compositionally biased toward polar residues.

It localises to the cytoplasm. Its subcellular location is the contractile vacuole. Rho GTPase-activating protein involved in the signal transduction pathway. Regulator of the contractile vacuole network as well as involved in driving vacuole emptying. This chain is GTPase activating protein homolog 2 (mgp2), found in Dictyostelium discoideum (Social amoeba).